The following is a 113-amino-acid chain: Small ribosomal subunit protein uS17 (113 aa).

This sequence belongs to the universal ribosomal protein uS17 family. Part of the 30S ribosomal subunit.

One of the primary rRNA binding proteins, it binds specifically to the 5'-end of 16S ribosomal RNA. This chain is Small ribosomal subunit protein uS17, found in Nanoarchaeum equitans (strain Kin4-M).